Reading from the N-terminus, the 204-residue chain is Molybdenum cofactor guanylyltransferase (204 aa).

GTP is bound by residues 12–14 (LAG), Lys-25, Asn-53, Asp-71, and Asp-101. Asp-101 lines the Mg(2+) pocket.

It belongs to the MobA family. As to quaternary structure, monomer. It depends on Mg(2+) as a cofactor.

The protein localises to the cytoplasm. The catalysed reaction is Mo-molybdopterin + GTP + H(+) = Mo-molybdopterin guanine dinucleotide + diphosphate. Transfers a GMP moiety from GTP to Mo-molybdopterin (Mo-MPT) cofactor (Moco or molybdenum cofactor) to form Mo-molybdopterin guanine dinucleotide (Mo-MGD) cofactor. This Ralstonia nicotianae (strain ATCC BAA-1114 / GMI1000) (Ralstonia solanacearum) protein is Molybdenum cofactor guanylyltransferase.